A 187-amino-acid polypeptide reads, in one-letter code: Large ribosomal subunit protein uL6 (187 aa).

The protein belongs to the universal ribosomal protein uL6 family. As to quaternary structure, part of the 50S ribosomal subunit.

In terms of biological role, this protein binds to the 23S rRNA, and is important in its secondary structure. It is located near the subunit interface in the base of the L7/L12 stalk, and near the tRNA binding site of the peptidyltransferase center. The chain is Large ribosomal subunit protein uL6 from Roseiflexus castenholzii (strain DSM 13941 / HLO8).